An 88-amino-acid chain; its full sequence is Protein MATERNALLY EXPRESSED GENE 2 (88 aa).

The N-terminal stretch at 1-27 (MEYRKRVDALVFFSLLLLGYFAAHAHG) is a signal peptide. Cys65 and Cys87 are oxidised to a cystine.

The protein belongs to the MEG family. In terms of tissue distribution, expressed exclusively in endosperm.

The polypeptide is Protein MATERNALLY EXPRESSED GENE 2 (MEG2) (Zea mays (Maize)).